The primary structure comprises 553 residues: Carboxypeptidase Y homolog A (553 aa).

The signal sequence occupies residues 1–17 (MRVLSTTLLIGAAAAAV). Residues 18–134 (SPPQQVLQAP…RLEAFDLRVK (117 aa)) constitute a propeptide that is removed on maturation. Cystine bridges form between C189/C428, C323/C337, C347/C370, C354/C363, and C392/C398. N-linked (GlcNAc...) asparagine glycosylation is present at N220. S276 is a catalytic residue. Residue D467 is part of the active site. N518 carries N-linked (GlcNAc...) asparagine glycosylation. H529 is an active-site residue.

It belongs to the peptidase S10 family.

The protein resides in the vacuole. It carries out the reaction Release of a C-terminal amino acid with broad specificity.. In terms of biological role, vacuolar carboxypeptidase involved in degradation of small peptides. Digests preferentially peptides containing an aliphatic or hydrophobic residue in P1' position, as well as methionine, leucine or phenylalanine in P1 position of ester substrate. The chain is Carboxypeptidase Y homolog A (cpyA) from Talaromyces stipitatus (strain ATCC 10500 / CBS 375.48 / QM 6759 / NRRL 1006) (Penicillium stipitatum).